We begin with the raw amino-acid sequence, 288 residues long: UTP--glucose-1-phosphate uridylyltransferase (288 aa).

It belongs to the UDPGP type 2 family.

The catalysed reaction is alpha-D-glucose 1-phosphate + UTP + H(+) = UDP-alpha-D-glucose + diphosphate. It functions in the pathway glycolipid metabolism; diglucosyl-diacylglycerol biosynthesis. Catalyzes the formation of UDP-glucose from glucose-1-phosphate and UTP. This is an intermediate step in the biosynthesis of diglucosyl-diacylglycerol (Glc2-DAG), i.e. the predominant glycolipid found in the S.aureus membrane, which is also used as a membrane anchor for lipoteichoic acid (LTA). In Staphylococcus aureus (strain USA300), this protein is UTP--glucose-1-phosphate uridylyltransferase (gtaB).